Here is a 71-residue protein sequence, read N- to C-terminus: uncharacterized protein (71 aa).

Over residues 1–16 (MAKSQAKKKRGHRLRN) the composition is skewed to basic residues. Disordered stretches follow at residues 1–39 (MAKS…RMTK) and 51–71 (KNPY…QKAA). A compositionally biased stretch (polar residues) spans 25–35 (RGSTPSFSTHG). The segment covering 51–64 (KNPYDHTAVDDKDF) has biased composition (basic and acidic residues).

This is an uncharacterized protein from Bacillus subtilis (strain 168).